Consider the following 1205-residue polypeptide: Plasma membrane calcium-transporting ATPase 1 (1205 aa).

The Cytoplasmic segment spans residues Gly-2–Ala-104. Residues Pro-94–Ile-111 form a calmodulin-binding subdomain A region. A helical transmembrane segment spans residues Leu-105 to Phe-125. Residues Tyr-126–Ile-153 are Extracellular-facing. A helical membrane pass occupies residues Glu-154–Trp-174. The Cytoplasmic portion of the chain corresponds to Ser-175–Leu-351. Positions Glu-296 to Glu-343 are disordered. Composition is skewed to basic and acidic residues over residues Glu-300–Ala-310 and Lys-322–Glu-343. The chain crosses the membrane as a helical span at residues Thr-352–Ile-371. Residues Ile-372–Lys-403 are Extracellular-facing. The chain crosses the membrane as a helical span at residues Phe-404–Val-424. Topologically, residues Thr-425–Phe-840 are cytoplasmic. Residue Asp-460 is the 4-aspartylphosphate intermediate of the active site. Mg(2+) contacts are provided by Asp-460, Thr-462, and Asp-782. A helical membrane pass occupies residues Leu-841 to Ile-861. The Extracellular segment spans residues Thr-862–Lys-868. A helical membrane pass occupies residues Ala-869–Thr-889. The Cytoplasmic portion of the chain corresponds to Glu-890 to Thr-912. A helical transmembrane segment spans residues Met-913–Phe-933. Over Ala-934–His-956 the chain is Extracellular. A helical transmembrane segment spans residues Tyr-957–Arg-976. At Lys-977 to Asn-990 the chain is on the cytoplasmic side. Residues Asn-991 to Gly-1012 form a helical membrane-spanning segment. Topologically, residues Gly-1013 to Glu-1024 are extracellular. A helical membrane pass occupies residues Gln-1025 to Thr-1045. At Ile-1046 to Leu-1205 the chain is on the cytoplasmic side. Thr-1101 bears the Phosphothreonine; by PKC mark. A disordered region spans residues Pro-1145–Leu-1205. Residues Thr-1183–Leu-1205 are compositionally biased toward polar residues.

It belongs to the cation transport ATPase (P-type) (TC 3.A.3) family. Type IIB subfamily.

It is found in the cell membrane. The enzyme catalyses Ca(2+)(in) + ATP + H2O = Ca(2+)(out) + ADP + phosphate + H(+). Functionally, catalyzes the hydrolysis of ATP coupled with the transport of calcium from the cytoplasm to the extracellular space thereby maintaining intracellular calcium homeostasis. This is Plasma membrane calcium-transporting ATPase 1 from Gallus gallus (Chicken).